The chain runs to 503 residues: MSARGQDIVSIIKEQIKEFGAPVSMTSVGSVIEVGDGIARIHGLSNAKYNELLEFPGGVMGIALNLEEDSVAAVILGDDANIKEGDEVKATGRISEITVGKGMIGRVVDPLGRPLDGKGPIKAETVRPLERIAPNVVDRKSVNTPVQTGIKAIDAMIPIGRGQRELIIGDRSTGKTAIALDTIINQKGGDLVCIYVAIGQKASKVARTVALLEQYGAMEHTIVVAANSSDAVALQYLAPYAGCAIGEEFMEQGQDALVVYDDLTKHAWAYRQLSLLLRRPPGREAYPGDVFYLHSRLLERAARLNDKLGGGSLTALPIIETQAGDVSAYVPTNVISITDGQIYLEPDMFNSGIRPAVNVGISVSRVGSSAQTKAMKKVASKLKMDMGQYRELAAFAQFGTSELDKATRMQLERGQRITEVLKQGQYQPVPMANQVAILYAALNGYLDSVEVAKVRDFESGLYRFLEANFASVLNNITKENAISAETETALKTALDDYKKGLVV.

Residue 169 to 176 coordinates ATP; the sequence is GDRSTGKT.

It belongs to the ATPase alpha/beta chains family. In terms of assembly, F-type ATPases have 2 components, CF(1) - the catalytic core - and CF(0) - the membrane proton channel. CF(1) has five subunits: alpha(3), beta(3), gamma(1), delta(1), epsilon(1). CF(0) has three main subunits: a(1), b(2) and c(9-12). The alpha and beta chains form an alternating ring which encloses part of the gamma chain. CF(1) is attached to CF(0) by a central stalk formed by the gamma and epsilon chains, while a peripheral stalk is formed by the delta and b chains.

It is found in the cell membrane. It carries out the reaction ATP + H2O + 4 H(+)(in) = ADP + phosphate + 5 H(+)(out). Functionally, produces ATP from ADP in the presence of a proton gradient across the membrane. The alpha chain is a regulatory subunit. This Dehalococcoides mccartyi (strain ATCC BAA-2266 / KCTC 15142 / 195) (Dehalococcoides ethenogenes (strain 195)) protein is ATP synthase subunit alpha.